A 432-amino-acid polypeptide reads, in one-letter code: Polyadenylate-binding protein RBP47C (432 aa).

The tract at residues 1-55 (MADVKIQSESESSDSHPVVDNQPPPPPPPPQQPAKEEENQPKTSPTPPPHWMRYP) is disordered. Residues 22–32 (QPPPPPPPPQQ) show a composition bias toward pro residues. RRM domains are found at residues 101–183 (KTIW…WASF) and 197–276 (LSIF…PATP). Residues 271–293 (IGPATPRKTNGYQQQGGYMPNGT) form a disordered region. Over residues 277-286 (RKTNGYQQQG) the composition is skewed to polar residues. The 73-residue stretch at 304–376 (TTIFVGGLDS…QTVRLSWGRN (73 aa)) folds into the RRM 3 domain.

This sequence belongs to the polyadenylate-binding RBP47 family. As to quaternary structure, interacts with the poly(A) tail of mRNA in nucleus. In terms of tissue distribution, expressed in leaves, stems, flowers, and seedlings.

The protein resides in the nucleus. It is found in the cytoplasmic granule. Heterogeneous nuclear ribonucleoprotein (hnRNP)-protein binding the poly(A) tail of mRNA and probably involved in some steps of pre-mRNA maturation. The protein is Polyadenylate-binding protein RBP47C (RBP47C) of Arabidopsis thaliana (Mouse-ear cress).